A 328-amino-acid polypeptide reads, in one-letter code: Phenylalanine--tRNA ligase alpha subunit (328 aa).

A Mg(2+)-binding site is contributed by Glu-253.

It belongs to the class-II aminoacyl-tRNA synthetase family. Phe-tRNA synthetase alpha subunit type 1 subfamily. Tetramer of two alpha and two beta subunits. Mg(2+) serves as cofactor.

It is found in the cytoplasm. It catalyses the reaction tRNA(Phe) + L-phenylalanine + ATP = L-phenylalanyl-tRNA(Phe) + AMP + diphosphate + H(+). The sequence is that of Phenylalanine--tRNA ligase alpha subunit from Actinobacillus pleuropneumoniae serotype 7 (strain AP76).